Here is a 238-residue protein sequence, read N- to C-terminus: Mannose-binding protein A (238 aa).

Positions 1-17 (MLLLPLLVLLCVVSVSS) are cleaved as a signal peptide. Residues 38–49 (DGRDGPKGEKGE) show a composition bias toward basic and acidic residues. Residues 38–87 (DGRDGPKGEKGEPGQGLRGLQGPPGKLGPPGSVGAPGSQGPKGQKGDRGD) form a disordered region. In terms of domain architecture, Collagen-like spans 39 to 88 (GRDGPKGEKGEPGQGLRGLQGPPGKLGPPGSVGAPGSQGPKGQKGDRGDS). The residue at position 43 (Pro-43) is a 4-hydroxyproline. Lys-44 and Lys-47 each carry 5-hydroxylysine. O-linked (Gal...) hydroxylysine glycans are attached at residues Lys-44 and Lys-47. Pro-50, Pro-61, Pro-67, Pro-73, and Pro-78 each carry 4-hydroxyproline. A 5-hydroxylysine mark is found at Lys-79 and Lys-82. Lys-79 and Lys-82 each carry an O-linked (Gal...) hydroxylysine glycan. Positions 143-238 (ALCSELRGTV…SHTAVCEFPA (96 aa)) constitute a C-type lectin domain. 2 cysteine pairs are disulfide-bonded: Cys-145–Cys-234 and Cys-212–Cys-226. Residues Asp-178, Glu-182, Glu-202, Asn-204, Asp-205, Glu-210, Asp-211, Asn-222, and Asp-223 each coordinate Ca(2+). Residues 202-210 (EPNDHGSGE) are calcium-dependent carbohydrate binding.

In terms of assembly, homotrimer. Forms higher oligomeric complexes formed by the association of two, three or more homotrimers. Oligomerization occurs in the endoplasmic reticulum. Interacts with MASP1 and MASP2. Post-translationally, hydroxylated on lysine and proline residues within the collagen-like domain. O-glycosylated. O-linked glycans on hydroxylysine residues consist of Glc-Gal disaccharides bound to the oxygen atom of post-translationally added hydroxyl groups. As to expression, detected in blood serum (at protein level).

The protein localises to the secreted. In terms of biological role, calcium-dependent lectin. Plays a role in the innate immune response by binding mannose, fucose and N-acetylglucosamine moieties on different microorganisms and mediating activation of the lectin complement pathway. Binds to late apoptotic cells, as well as to apoptotic blebs and to necrotic cells, but not to early apoptotic cells, facilitating their uptake by macrophages. The sequence is that of Mannose-binding protein A (Mbl1) from Rattus norvegicus (Rat).